Consider the following 430-residue polypeptide: Serine--tRNA ligase (430 aa).

Thr-237–Glu-239 is a binding site for L-serine. Arg-268 to Glu-270 contributes to the ATP binding site. An L-serine-binding site is contributed by Glu-291. Glu-355–Ser-358 provides a ligand contact to ATP. Ser-391 contacts L-serine.

This sequence belongs to the class-II aminoacyl-tRNA synthetase family. Type-1 seryl-tRNA synthetase subfamily. As to quaternary structure, homodimer. The tRNA molecule binds across the dimer.

The protein resides in the cytoplasm. It carries out the reaction tRNA(Ser) + L-serine + ATP = L-seryl-tRNA(Ser) + AMP + diphosphate + H(+). The catalysed reaction is tRNA(Sec) + L-serine + ATP = L-seryl-tRNA(Sec) + AMP + diphosphate + H(+). It participates in aminoacyl-tRNA biosynthesis; selenocysteinyl-tRNA(Sec) biosynthesis; L-seryl-tRNA(Sec) from L-serine and tRNA(Sec): step 1/1. Functionally, catalyzes the attachment of serine to tRNA(Ser). Is also able to aminoacylate tRNA(Sec) with serine, to form the misacylated tRNA L-seryl-tRNA(Sec), which will be further converted into selenocysteinyl-tRNA(Sec). In Citrobacter koseri (strain ATCC BAA-895 / CDC 4225-83 / SGSC4696), this protein is Serine--tRNA ligase.